A 108-amino-acid polypeptide reads, in one-letter code: uncharacterized protein (108 aa).

Transmembrane regions (helical) follow at residues 26–46 (GAVYTGEFTLYLLFIFGALII), 54–74 (LMTLFGLAALAFSLSVSPLIF), and 84–104 (INYQLFWLSIFLGAIAFCIYM).

The protein localises to the cell membrane. This is an uncharacterized protein from Methanocaldococcus jannaschii (strain ATCC 43067 / DSM 2661 / JAL-1 / JCM 10045 / NBRC 100440) (Methanococcus jannaschii).